A 209-amino-acid polypeptide reads, in one-letter code: Probable GTP-binding protein EngB (209 aa).

One can recognise an EngB-type G domain in the interval 27–201; that stretch reads SGVEIAFAGR…ATKLDSWFAE (175 aa). Residues 35 to 42, 62 to 66, 80 to 83, 147 to 150, and 180 to 182 each bind GTP; these read GRSNAGKS, GRTQL, DLPG, TKAD, and YSA. The Mg(2+) site is built by S42 and T64.

This sequence belongs to the TRAFAC class TrmE-Era-EngA-EngB-Septin-like GTPase superfamily. EngB GTPase family. Requires Mg(2+) as cofactor.

Its function is as follows. Necessary for normal cell division and for the maintenance of normal septation. The protein is Probable GTP-binding protein EngB of Glaesserella parasuis serovar 5 (strain SH0165) (Haemophilus parasuis).